The chain runs to 125 residues: Small ribosomal subunit protein uS11 (125 aa).

The protein belongs to the universal ribosomal protein uS11 family. As to quaternary structure, part of the 30S ribosomal subunit. Interacts with proteins S7 and S18. Binds to IF-3.

In terms of biological role, located on the platform of the 30S subunit, it bridges several disparate RNA helices of the 16S rRNA. Forms part of the Shine-Dalgarno cleft in the 70S ribosome. The protein is Small ribosomal subunit protein uS11 of Coprothermobacter proteolyticus (strain ATCC 35245 / DSM 5265 / OCM 4 / BT).